Here is a 191-residue protein sequence, read N- to C-terminus: MGGSGSRLSKELLAEYQDLTFLTKQEILLAHRRFCELLPPEHRTVEESLHTRVSFEQILSLPELKANPFKERICMVFSTSPTRDSLSFEDFLDLLSVFSDTATPDIKSHYAFRIFDFDDDGTLDREDLSRLVNCLTGEGEDTRLSASEMKQLIDNILEESDIDRDGTINLSEFQHVISRSPDFASSFKIVL.

A lipid anchor (N-myristoyl glycine) is attached at Gly-2. EF-hand domains are found at residues 103 to 138 (TPDI…LTGE) and 148 to 183 (EMKQ…SPDF). The Ca(2+) site is built by Asp-116, Asp-118, Asp-120, Thr-122, Asp-127, Asp-161, Asp-163, Asp-165, Thr-167, and Glu-172.

In terms of assembly, monomer. Interacts with the heterodimeric integrin alpha-IIb/beta3 (ITGA2B-ITGB3). Interacts with ITGA2B (via cytoplasmic domain); the interaction is direct and calcium-dependent. Interacts with the protein kinases PLK2/SNK and PRKDC (via the region immediately upstream of the kinase domain). Interacts with PLK3; the interaction inhibits PLK3 kinase activity. Interacts with PSEN2. Interacts (via C-terminus) with F8. Interacts with NBR1 (via C-terminus). Interacts with FEZ1 (via C-terminus). Interacts with UBR5 (via C-terminus); the interaction is sensitive to DNA damage, and may target CIB1 for ubiquitin-mediated degradation. Interacts with IFI6; the interaction is direct. Interacts with BCL2. Interacts with ITPR3; the interaction occurs in a calcium dependent manner. Interacts with PTK2/FAK1. Interacts with MAP3K5; the interaction inhibits MAP3K5 activation by phosphorylation, and its subsequent interaction with TRAF2. Interacts (via C-terminal region) with STMN2 (via the N-terminal region); the interaction is direct, occurs in a calcium-dependent manner and attenuates the STMN2-induced neurite outgrowth inhibition. Interacts with SPHK1, the interaction occurs in a calcium-dependent manner. Interacts with ITGA2B (via C-terminal cytoplasmic tail); the interaction occurs upon platelet aggregation and is stabilized/increased in a calcium and magnesium-dependent manner. Interacts with PAK1 (via N-terminal region); the interaction is direct and occurs in a calcium-dependent manner. Interacts with RAC3 (via C-terminal region); the interaction induces their association with the cytoskeleton upon alpha-IIb/beta3 integrin-mediated adhesion. Interacts with ITGA5 and ITGAV. Interacts with MYO1C. Interacts with ITGA2B (via C-terminal cytoplasmic tail region). Interacts (via C-terminal region) with PPP3R1; the interaction increases upon cardiomyocytes hypertrophy. Interacts with CACNA1C; the interaction increases upon cardiomyocytes hypertrophy. Interacts with TAS1R2 (via C-terminus); this interaction is independent of the myristoylation state of CIB1. Interacts and forms a complex with TMC6 and TMC8; the interaction stabilizes each component of the complex. Expressed in cardiomyocytes and neurons (at protein level). Expressed during early neural development.

The protein resides in the membrane. Its subcellular location is the cell membrane. It is found in the sarcolemma. The protein localises to the apical cell membrane. It localises to the cell projection. The protein resides in the ruffle membrane. Its subcellular location is the filopodium tip. It is found in the growth cone. The protein localises to the lamellipodium. It localises to the cytoplasm. The protein resides in the cytoskeleton. Its subcellular location is the microtubule organizing center. It is found in the centrosome. The protein localises to the perinuclear region. It localises to the nucleus. The protein resides in the neuron projection. Its subcellular location is the perikaryon. Functionally, calcium-binding protein that plays a role in the regulation of numerous cellular processes, such as cell differentiation, cell division, cell proliferation, cell migration, thrombosis, angiogenesis, cardiac hypertrophy and apoptosis. Involved in bone marrow megakaryocyte differentiation by negatively regulating thrombopoietin-mediated signaling pathway. Participates in the endomitotic cell cycle of megakaryocyte, a form of mitosis in which both karyokinesis and cytokinesis are interrupted. Plays a role in integrin signaling by negatively regulating alpha-IIb/beta3 activation in thrombin-stimulated megakaryocytes preventing platelet aggregation. Up-regulates PTK2/FAK1 activity, and is also needed for the recruitment of PTK2/FAK1 to focal adhesions; it thus appears to play an important role in focal adhesion formation. Positively regulates cell migration on fibronectin in a CDC42-dependent manner, the effect being negatively regulated by PAK1. Functions as a negative regulator of stress activated MAP kinase (MAPK) signaling pathways. Down-regulates inositol 1,4,5-trisphosphate receptor-dependent calcium signaling. Involved in sphingosine kinase SPHK1 translocation to the plasma membrane in a N-myristoylation-dependent manner preventing TNF-alpha-induced apoptosis. Regulates serine/threonine-protein kinase PLK3 activity for proper completion of cell division progression. Plays a role in microtubule (MT) dynamics during neuronal development; disrupts the MT depolymerization activity of STMN2 attenuating NGF-induced neurite outgrowth and the MT reorganization at the edge of lamellipodia. Promotes cardiomyocyte hypertrophy via activation of the calcineurin/NFAT signaling pathway. Stimulates calcineurin PPP3R1 activity by mediating its anchoring to the sarcolemma. In ischemia-induced (pathological or adaptive) angiogenesis, stimulates endothelial cell proliferation, migration and microvessel formation by activating the PAK1 and ERK1/ERK2 signaling pathway. Also promotes cancer cell survival and proliferation. May regulate cell cycle and differentiation of spermatogenic germ cells, and/or differentiation of supporting Sertoli cells. Forms a complex with TMC6/EVER1 and TMC8/EVER2 in lymphocytes and keratynocytes where CIB1 stabilizes TMC6 and TMC8 levels and reciprocally. The sequence is that of Calcium and integrin-binding protein 1 (Cib1) from Rattus norvegicus (Rat).